A 179-amino-acid chain; its full sequence is Large ribosomal subunit protein uL6 (179 aa).

It belongs to the universal ribosomal protein uL6 family. Part of the 50S ribosomal subunit.

Functionally, this protein binds to the 23S rRNA, and is important in its secondary structure. It is located near the subunit interface in the base of the L7/L12 stalk, and near the tRNA binding site of the peptidyltransferase center. The chain is Large ribosomal subunit protein uL6 from Chlorobium phaeovibrioides (strain DSM 265 / 1930) (Prosthecochloris vibrioformis (strain DSM 265)).